The sequence spans 357 residues: D-amino-acid oxidase (357 aa).

FAD contacts are provided by Ala13, Gly14, Ser42, Gly47, Arg289, Gly315, and Gly318. Arg289 serves as a coordination point for D-proline. Residue Arg289 coordinates D-serine.

This sequence belongs to the DAMOX/DASOX family. Requires FAD as cofactor.

Its subcellular location is the cytoplasm. It is found in the secreted. It localises to the cell wall. The catalysed reaction is a D-alpha-amino acid + O2 + H2O = a 2-oxocarboxylate + H2O2 + NH4(+). The enzyme catalyses D-phenylalanine + O2 + H2O = 3-phenylpyruvate + H2O2 + NH4(+). It carries out the reaction D-lysine + O2 + H2O = 6-amino-2-oxohexanoate + H2O2 + NH4(+). It catalyses the reaction D-methionine + O2 + H2O = 4-methylsulfanyl-2-oxobutanoate + H2O2 + NH4(+). The catalysed reaction is D-arginine + O2 + H2O = 5-guanidino-2-oxopentanoate + H2O2 + NH4(+). The enzyme catalyses D-ornithine + O2 + H2O = 5-amino-2-oxopentanoate + H2O2 + NH4(+). It carries out the reaction D-leucine + O2 + H2O = 4-methyl-2-oxopentanoate + H2O2 + NH4(+). It catalyses the reaction D-histidine + O2 + H2O = 3-(imidazol-5-yl)pyruvate + H2O2 + NH4(+). Its activity is regulated as follows. Activated by manganese, copper, and iron ions. Inhibited by barium, aluminum, and zinc ions. Catalyzes the oxidative deamination of D-amino acids with broad substrate specificity. In Unknown prokaryotic organism, this protein is D-amino-acid oxidase.